Here is a 517-residue protein sequence, read N- to C-terminus: Ribose import ATP-binding protein RbsA (517 aa).

ABC transporter domains are found at residues 11–251 and 263–507; these read LEMR…VGRD and YDPG…ALAT. Position 43–50 (43–50) interacts with ATP; the sequence is GENGAGKS.

This sequence belongs to the ABC transporter superfamily. Ribose importer (TC 3.A.1.2.1) family. As to quaternary structure, the complex is composed of an ATP-binding protein (RbsA), two transmembrane proteins (RbsC) and a solute-binding protein (RbsB).

The protein localises to the cell inner membrane. The enzyme catalyses D-ribose(out) + ATP + H2O = D-ribose(in) + ADP + phosphate + H(+). Part of the ABC transporter complex RbsABC involved in ribose import. Responsible for energy coupling to the transport system. This chain is Ribose import ATP-binding protein RbsA, found in Burkholderia pseudomallei (strain K96243).